The chain runs to 437 residues: Nuclear distribution protein PAC1 (437 aa).

Positions 64–94 (LSVIRLQRKVMDLETRLEAAEREASSTHKAN) form a coiled coil. WD repeat units lie at residues 114–153 (LHKQ…IETT), 156–217 (AHTR…ANVK), 221–260 (GHDH…CVRT), 263–301 (GHTD…GKMT), 304–356 (GHEH…LLIL), 358–397 (GHDN…RCIR), and 401–437 (AHGH…KVWQ). The segment at 165 to 186 (DFSQPDTGASRDKSHDKPRADV) is disordered. Basic and acidic residues predominate over residues 173 to 186 (ASRDKSHDKPRADV).

The protein belongs to the WD repeat LIS1/nudF family. In terms of assembly, self-associates. Interacts with NDL1 and dynein.

It is found in the cytoplasm. Its subcellular location is the cytoskeleton. The protein localises to the spindle pole. In terms of biological role, positively regulates the activity of the minus-end directed microtubule motor protein dynein. Plays a central role in positioning the mitotic spindle at the bud neck during cell division. Targets cytoplasmic dynein to microtubule plus ends, thereby promoting dynein-mediated microtubule sliding along the bud cortex and consequently the movement of the mitotic spindle to the bud neck. The sequence is that of Nuclear distribution protein PAC1 from Yarrowia lipolytica (strain CLIB 122 / E 150) (Yeast).